The primary structure comprises 547 residues: Chaperonin GroEL (547 aa).

Residues 30 to 33 (TLGP), Lys-51, 87 to 91 (DGTTT), Gly-415, and Asp-495 each bind ATP.

It belongs to the chaperonin (HSP60) family. Forms a cylinder of 14 subunits composed of two heptameric rings stacked back-to-back. Interacts with the co-chaperonin GroES.

The protein resides in the cytoplasm. It carries out the reaction ATP + H2O + a folded polypeptide = ADP + phosphate + an unfolded polypeptide.. In terms of biological role, together with its co-chaperonin GroES, plays an essential role in assisting protein folding. The GroEL-GroES system forms a nano-cage that allows encapsulation of the non-native substrate proteins and provides a physical environment optimized to promote and accelerate protein folding. This chain is Chaperonin GroEL, found in Rhizobium leguminosarum bv. trifolii (strain WSM2304).